We begin with the raw amino-acid sequence, 149 residues long: Large ribosomal subunit protein bL9 (149 aa).

Belongs to the bacterial ribosomal protein bL9 family.

In terms of biological role, binds to the 23S rRNA. The polypeptide is Large ribosomal subunit protein bL9 (Thermotoga petrophila (strain ATCC BAA-488 / DSM 13995 / JCM 10881 / RKU-1)).